We begin with the raw amino-acid sequence, 187 residues long: Elongation factor P (187 aa).

Belongs to the elongation factor P family.

It localises to the cytoplasm. Its pathway is protein biosynthesis; polypeptide chain elongation. In terms of biological role, involved in peptide bond synthesis. Stimulates efficient translation and peptide-bond synthesis on native or reconstituted 70S ribosomes in vitro. Probably functions indirectly by altering the affinity of the ribosome for aminoacyl-tRNA, thus increasing their reactivity as acceptors for peptidyl transferase. In Mycobacterium sp. (strain JLS), this protein is Elongation factor P.